We begin with the raw amino-acid sequence, 173 residues long: Alpha-crystallin A chain (173 aa).

M1 is subject to N-acetylmethionine. The segment at 1-63 (MDVTIQHPWF…RTVLDSGISE (63 aa)) is required for complex formation with BFSP1 and BFSP2. Q6 bears the Deamidated glutamine; partial mark. Residue S45 is modified to Phosphoserine. At Q50 the chain carries Deamidated glutamine; partial. The sHSP domain maps to 52–162 (LFRTVLDSGI…GHSERAIPVS (111 aa)). N6-acetyllysine occurs at positions 70 and 99. Position 100 (H100) interacts with Zn(2+). N101 carries the deamidated asparagine; partial modification. Residues E102 and H107 each coordinate Zn(2+). S122 carries the phosphoserine modification. A Deamidated asparagine; partial modification is found at N123. The interval 145–173 (KVQSGLDAGHSERAIPVSREEKPSSAPSS) is disordered. Position 147 is a deamidated glutamine; partial (Q147). Positions 153–167 (GHSERAIPVSREEKP) are enriched in basic and acidic residues. H154 lines the Zn(2+) pocket. A glycan (O-linked (GlcNAc) serine) is linked at S162.

It belongs to the small heat shock protein (HSP20) family. Heteromer composed of three CRYAA and one CRYAB subunits. Inter-subunit bridging via zinc ions enhances stability, which is crucial as there is no protein turn over in the lens. Can also form homodimers and homotetramers (dimers of dimers) which serve as the building blocks of homooligomers. Within homooligomers, the zinc-binding motif is created from residues of 3 different molecules. His-100 and Glu-102 from one molecule are ligands of the zinc ion, and His-107 and His-154 residues from additional molecules complete the site with tetrahedral coordination geometry. Part of a complex required for lens intermediate filament formation composed of BFSP1, BFSP2 and CRYAA. Acetylation at Lys-70 may increase chaperone activity. In terms of processing, undergoes age-dependent proteolytical cleavage at the C-terminus.

The protein resides in the cytoplasm. The protein localises to the nucleus. Functionally, contributes to the transparency and refractive index of the lens. Acts as a chaperone, preventing aggregation of various proteins under a wide range of stress conditions. Required for the correct formation of lens intermediate filaments as part of a complex composed of BFSP1, BFSP2 and CRYAA. This is Alpha-crystallin A chain (CRYAA) from Meriones unguiculatus (Mongolian jird).